Consider the following 214-residue polypeptide: Pyridoxine/pyridoxamine 5'-phosphate oxidase (214 aa).

Substrate contacts are provided by residues 8 to 11 (RINY) and Lys-66. FMN is bound by residues 61–66 (RIVLVK), 76–77 (FT), Arg-82, Lys-83, and Gln-105. Tyr-123, Arg-127, and Ser-131 together coordinate substrate. FMN contacts are provided by residues 140–141 (QS) and Trp-184. 190-192 (RLH) contacts substrate. Arg-194 is a binding site for FMN.

This sequence belongs to the pyridoxamine 5'-phosphate oxidase family. In terms of assembly, homodimer. Requires FMN as cofactor.

It carries out the reaction pyridoxamine 5'-phosphate + O2 + H2O = pyridoxal 5'-phosphate + H2O2 + NH4(+). The catalysed reaction is pyridoxine 5'-phosphate + O2 = pyridoxal 5'-phosphate + H2O2. Its pathway is cofactor metabolism; pyridoxal 5'-phosphate salvage; pyridoxal 5'-phosphate from pyridoxamine 5'-phosphate: step 1/1. It participates in cofactor metabolism; pyridoxal 5'-phosphate salvage; pyridoxal 5'-phosphate from pyridoxine 5'-phosphate: step 1/1. Its function is as follows. Catalyzes the oxidation of either pyridoxine 5'-phosphate (PNP) or pyridoxamine 5'-phosphate (PMP) into pyridoxal 5'-phosphate (PLP). The polypeptide is Pyridoxine/pyridoxamine 5'-phosphate oxidase (Burkholderia multivorans (strain ATCC 17616 / 249)).